Reading from the N-terminus, the 442-residue chain is Meiotically up-regulated gene 191 protein (442 aa).

Thr-361 carries the post-translational modification Phosphothreonine. Over residues Arg-416–Gln-429 the composition is skewed to polar residues. The interval Arg-416–Ser-442 is disordered. The span at Gly-433 to Ser-442 shows a compositional bias: basic and acidic residues.

It is found in the cytoplasm. It localises to the nucleus. Has a role in meiosis. The chain is Meiotically up-regulated gene 191 protein (mug191) from Schizosaccharomyces pombe (strain 972 / ATCC 24843) (Fission yeast).